Reading from the N-terminus, the 196-residue chain is UMP-CMP kinase (196 aa).

13-18 contacts ATP; it reads GAGKGT. Position 33 is a phosphoserine (Ser33). The NMP stretch occupies residues 33-63; that stretch reads SAGELLRDERKNPDSQYGELIEKYIKEGKIV. Residue Arg39 coordinates a ribonucleoside 5'-phosphate. N6-acetyllysine occurs at positions 43 and 55. An a ribonucleoside 5'-phosphate-binding site is contributed by 61 to 63; sequence KIV. Residue Lys73 forms a Glycyl lysine isopeptide (Lys-Gly) (interchain with G-Cter in SUMO2) linkage. 93–96 lines the a ribonucleoside 5'-phosphate pocket; it reads GFPR. Asn100 contributes to the CMP binding site. Lys106 carries the post-translational modification N6-succinyllysine. Residues 133 to 143 are LID; the sequence is ERGKSSGRSDD. Arg134 contacts ATP. Residues Arg140 and Arg151 each coordinate a ribonucleoside 5'-phosphate. Residue Lys179 participates in ATP binding. Ser180 carries the phosphoserine modification.

This sequence belongs to the adenylate kinase family. UMP-CMP kinase subfamily. As to quaternary structure, monomer. Mg(2+) is required as a cofactor.

The protein localises to the nucleus. It localises to the cytoplasm. The enzyme catalyses CMP + ATP = CDP + ADP. It catalyses the reaction dCMP + ATP = dCDP + ADP. The catalysed reaction is UMP + ATP = UDP + ADP. It carries out the reaction a 2'-deoxyribonucleoside 5'-diphosphate + ATP = a 2'-deoxyribonucleoside 5'-triphosphate + ADP. The enzyme catalyses a ribonucleoside 5'-diphosphate + ATP = a ribonucleoside 5'-triphosphate + ADP. Its function is as follows. Catalyzes the phosphorylation of pyrimidine nucleoside monophosphates at the expense of ATP. Plays an important role in de novo pyrimidine nucleotide biosynthesis. Has preference for UMP and CMP as phosphate acceptors. Also displays broad nucleoside diphosphate kinase activity. This Mus musculus (Mouse) protein is UMP-CMP kinase (Cmpk1).